The sequence spans 308 residues: Maspardin (308 aa).

The region spanning 87–159 (FCDGFRKLLD…NSFWLMPAFM (73 aa)) is the AB hydrolase-1 domain.

Belongs to the AB hydrolase superfamily. Interacts with CD4. Interacts with ALDH16A1.

The protein resides in the cytoplasm. May play a role as a negative regulatory factor in CD4-dependent T-cell activation. This Macaca fascicularis (Crab-eating macaque) protein is Maspardin (SPG21).